Here is a 463-residue protein sequence, read N- to C-terminus: 4-hydroxybenzoate polyprenyltransferase, mitochondrial (463 aa).

Disordered stretches follow at residues 28–48 (NNNTNNNNNNNGINKYNSTFN) and 133–152 (LLDDNNSNSNNNNNSNNNKP). Residues 137 to 150 (NNSNSNNNNNSNNN) are compositionally biased toward low complexity. Transmembrane regions (helical) follow at residues 181–201 (IGVWLLLYPCCWSISLAAPAG), 206–226 (LKTMLVFGIGAYVMRSAGCVI), 257–277 (LIFLGGQLLASFGLILSSLNY), 305–325 (FVLGLAFNWGALAGYSAIAGS), 330–350 (IVAPLYLAGISWTMVYDTIYA), 375–395 (IILSVFSGLVISGMFLTGIAA), and 431–451 (FISNKNFGLYFLLIIIVSKLL).

This sequence belongs to the UbiA prenyltransferase family. It depends on Mg(2+) as a cofactor.

It is found in the mitochondrion inner membrane. It catalyses the reaction an all-trans-polyprenyl diphosphate + 4-hydroxybenzoate = a 4-hydroxy-3-(all-trans-polyprenyl)benzoate + diphosphate. It participates in cofactor biosynthesis; ubiquinone biosynthesis. Functionally, catalyzes the prenylation of para-hydroxybenzoate (PHB) with an all-trans polyprenyl group. Mediates the second step in the final reaction sequence of coenzyme Q (CoQ) biosynthesis, which is the condensation of the polyisoprenoid side chain with PHB. In terms of biological role, catalyzes the prenylation of para-hydroxybenzoate (PHB) with an all-trans polyprenyl group. Mediates the second step in the final reaction sequence of coenzyme Q (CoQ) biosynthesis, which is the condensation of the polyisoprenoid side chain with PHB, generating the first membrane-bound Q intermediate. This Dictyostelium discoideum (Social amoeba) protein is 4-hydroxybenzoate polyprenyltransferase, mitochondrial.